The chain runs to 246 residues: Exosome complex component Rrp41 (246 aa).

Belongs to the RNase PH family. Rrp41 subfamily. Component of the archaeal exosome complex. Forms a hexameric ring-like arrangement composed of 3 Rrp41-Rrp42 heterodimers. The hexameric ring associates with a trimer of Rrp4 and/or Csl4 subunits.

The protein resides in the cytoplasm. Its function is as follows. Catalytic component of the exosome, which is a complex involved in RNA degradation. Has 3'-&gt;5' exoribonuclease activity. Can also synthesize heteromeric RNA-tails. The chain is Exosome complex component Rrp41 from Pyrobaculum calidifontis (strain DSM 21063 / JCM 11548 / VA1).